We begin with the raw amino-acid sequence, 106 residues long: Acylphosphatase-2 (106 aa).

The Acylphosphatase-like domain occupies 16–106 (SVDYEVFGTV…LEYSDFSIRY (91 aa)). Active-site residues include Arg-31 and Asn-49. Ser-100 bears the Phosphoserine mark.

The protein belongs to the acylphosphatase family.

It carries out the reaction an acyl phosphate + H2O = a carboxylate + phosphate + H(+). The polypeptide is Acylphosphatase-2 (Acyp2) (Mus musculus (Mouse)).